The sequence spans 852 residues: Phenylalanine--tRNA ligase beta subunit (852 aa).

Residues 44–159 enclose the tRNA-binding domain; sequence PETTGPLVIG…DADLASANLK (116 aa). Positions 428 to 510 constitute a B5 domain; that stretch reads PEMPMITIHT…RLEGLEDIPS (83 aa). Residues Asp488, Asp494, Glu497, and Glu498 each coordinate Mg(2+). In terms of domain architecture, FDX-ACB spans 758–851; that stretch reads SAFPAVLQDI…ATEKVGAQLR (94 aa).

This sequence belongs to the phenylalanyl-tRNA synthetase beta subunit family. Type 1 subfamily. In terms of assembly, tetramer of two alpha and two beta subunits. It depends on Mg(2+) as a cofactor.

It is found in the cytoplasm. It catalyses the reaction tRNA(Phe) + L-phenylalanine + ATP = L-phenylalanyl-tRNA(Phe) + AMP + diphosphate + H(+). The protein is Phenylalanine--tRNA ligase beta subunit of Corynebacterium jeikeium (strain K411).